The following is a 244-amino-acid chain: Small ribosomal subunit protein uS2 (244 aa).

Belongs to the universal ribosomal protein uS2 family.

In Desulforudis audaxviator (strain MP104C), this protein is Small ribosomal subunit protein uS2.